We begin with the raw amino-acid sequence, 300 residues long: Glucose and ribitol dehydrogenase homolog (300 aa).

Residues 1 to 14 (MASQQFPPQNQETQ) are compositionally biased toward polar residues. The disordered stretch occupies residues 1 to 23 (MASQQFPPQNQETQPGKEHAMDP). 44 to 68 (IVTGGDSGIGRAVCLCFALEGATVA) provides a ligand contact to NAD(+). Ser192 provides a ligand contact to substrate. Catalysis depends on Tyr205, which acts as the Proton acceptor.

It belongs to the short-chain dehydrogenases/reductases (SDR) family.

Functionally, may act as a short alcohol-polyol-sugar dehydrogenase possibly related to carbohydrate metabolism and the acquisition of desiccation tolerance. May also be involved in signal transduction. This is Glucose and ribitol dehydrogenase homolog from Oryza sativa subsp. japonica (Rice).